The sequence spans 797 residues: Kinesin-like protein KIF18B (797 aa).

The 342-residue stretch at 11-352 (TVAVVVRVRP…LKYANRAKEI (342 aa)) folds into the Kinesin motor domain. 110–117 (GATGAGKT) is a binding site for ATP. Residues 367–402 (ISKYATICEQLKTEVADLQAKLRAYEDAARDAGKQI) are a coiled coil. Disordered regions lie at residues 412–476 (EEAV…PNRL), 528–564 (AAVS…PSVP), 579–640 (LSSP…KEPQ), and 730–797 (KGSS…SGPR). The segment covering 594 to 608 (MSNTSRLETPHSLNT) has biased composition (polar residues). Residues 731-744 (GSSIPKPSSISKGS) show a composition bias toward low complexity.

The protein belongs to the TRAFAC class myosin-kinesin ATPase superfamily. Kinesin family.

It localises to the nucleus. The protein localises to the cytoplasm. The protein resides in the cytoskeleton. In terms of biological role, may play an important role in microtubule plus-end depolymerizing activity in mitotic cells. The sequence is that of Kinesin-like protein KIF18B (KIF18B) from Gallus gallus (Chicken).